We begin with the raw amino-acid sequence, 132 residues long: Glycine cleavage system H protein (132 aa).

The 83-residue stretch at 24-106 (TVRVGITDFA…YGAGWLLDVQ (83 aa)) folds into the Lipoyl-binding domain. At Lys-65 the chain carries N6-lipoyllysine.

This sequence belongs to the GcvH family. In terms of assembly, the glycine cleavage system is composed of four proteins: P, T, L and H. It depends on (R)-lipoate as a cofactor.

Its function is as follows. The glycine cleavage system catalyzes the degradation of glycine. The H protein shuttles the methylamine group of glycine from the P protein to the T protein. The protein is Glycine cleavage system H protein of Mycobacterium avium (strain 104).